The primary structure comprises 260 residues: Lys-63-specific deubiquitinase BRCC36 (260 aa).

In terms of domain architecture, MPN spans Val-6–Gln-149. Zn(2+)-binding residues include His-92, His-94, and Asp-105. The JAMM motif motif lies at His-92–Asp-105.

It belongs to the peptidase M67A family. BRCC36 subfamily. In terms of assembly, component of the BRCA1-A complex, at least composed of brca1, bard1, uimc1/rap80, abraxas1, brcc3/brcc36, babam2 and babam1/nba1. In the BRCA1-A complex, interacts directly with abraxas1 and babam2. Component of the BRISC complex, at least composed of abraxas2, brcc3/brcc36, babam2 and babam1/nba1. Within the complex, interacts directly with abraxas2. Both the BRCA1-A complex and the BRISC complex bind polyubiquitin. Zn(2+) is required as a cofactor.

The protein resides in the nucleus. It localises to the cytoplasm. The protein localises to the cytoskeleton. It is found in the spindle pole. Metalloprotease that specifically cleaves 'Lys-63'-linked polyubiquitin chains. Does not have activity toward 'Lys-48'-linked polyubiquitin chains. Component of the BRCA1-A complex, a complex that specifically recognizes 'Lys-63'-linked ubiquitinated histones H2A and H2AX at DNA lesions sites, leading to target the brca1-bard1 heterodimer to sites of DNA damage at double-strand breaks (DSBs). In the BRCA1-A complex, it specifically removes 'Lys-63'-linked ubiquitin on histones H2A and H2AX, antagonizing the rnf8-dependent ubiquitination at double-strand breaks (DSBs). Catalytic subunit of the BRISC complex, a multiprotein complex that specifically cleaves 'Lys-63'-linked ubiquitin in various substrates. Mediates the specific 'Lys-63'-specific deubiquitination associated with the COP9 signalosome complex (CSN), via the interaction of the BRISC complex with the CSN complex. The BRISC complex is required for normal mitotic spindle assembly and microtubule attachment to kinetochores via its role in deubiquitinating numa1. Plays a role in interferon signaling via its role in the deubiquitination of the interferon receptor ifnar1; deubiquitination increases ifnar1 activity by enhancing its stability and cell surface expression. Acts as a regulator of the NLRP3 inflammasome by mediating deubiquitination of nlrp3. Down-regulates the response to bacterial lipopolysaccharide (LPS) via its role in ifnar1 deubiquitination. The polypeptide is Lys-63-specific deubiquitinase BRCC36 (brcc3) (Salmo salar (Atlantic salmon)).